The primary structure comprises 130 residues: Small ribosomal subunit protein uS9 (130 aa).

This sequence belongs to the universal ribosomal protein uS9 family.

The protein is Small ribosomal subunit protein uS9 of Streptococcus thermophilus (strain CNRZ 1066).